A 697-amino-acid chain; its full sequence is Pentatricopeptide repeat-containing protein At2g13600 (697 aa).

PPR repeat units follow at residues 18-53 (DSSP…GFSN), 54-84 (EIFI…MPQR), 85-115 (NIYT…MPER), 116-150 (DQCT…GFVL), 151-185 (NEYS…PFLS), 186-216 (DVYI…MGDR), 217-251 (NVVS…RVEP), 252-282 (DEVT…VVKN), 288-322 (DIIL…NVIA), 324-349 (TSMI…MAER), 350-384 (NVVS…SVCP), 385-419 (THYS…GFKF), 426-456 (DIFV…MMER), 457-491 (DCVS…GEKP), 492-527 (DHIT…GVAP), and 528-558 (LRDH…MPMQ). The type E motif stretch occupies residues 563–638 (IWGSLLAACK…QPGCSWIKIQ (76 aa)). Positions 639 to 669 (GHDHVFMVKDKSHPRKKQIHSLLDILIAEMR) are type E(+) motif.

It belongs to the PPR family. PCMP-E subfamily.

This chain is Pentatricopeptide repeat-containing protein At2g13600 (PCMP-E76), found in Arabidopsis thaliana (Mouse-ear cress).